Here is a 478-residue protein sequence, read N- to C-terminus: Membrane-bound lytic murein transglycosylase F (478 aa).

The N-terminal stretch at 1-22 (MTRFLFAIILGFLLTACQQVTV) is a signal peptide. The interval 23 to 257 (EETEYVPHKL…HLNEKYFGHV (235 aa)) is non-LT domain. The tract at residues 258 to 478 (KRFDYIDTRA…PGTLSPDKPK (221 aa)) is LT domain. Residue Glu302 is part of the active site. Residues 446–478 (SKQQNSDEEEPSDLASEDGPAPVPGTLSPDKPK) are disordered. Residues 451-461 (SDEEEPSDLAS) are compositionally biased toward acidic residues.

In the N-terminal section; belongs to the bacterial solute-binding protein 3 family. It in the C-terminal section; belongs to the transglycosylase Slt family.

Its subcellular location is the cell outer membrane. It catalyses the reaction Exolytic cleavage of the (1-&gt;4)-beta-glycosidic linkage between N-acetylmuramic acid (MurNAc) and N-acetylglucosamine (GlcNAc) residues in peptidoglycan, from either the reducing or the non-reducing ends of the peptidoglycan chains, with concomitant formation of a 1,6-anhydrobond in the MurNAc residue.. Functionally, murein-degrading enzyme that degrades murein glycan strands and insoluble, high-molecular weight murein sacculi, with the concomitant formation of a 1,6-anhydromuramoyl product. Lytic transglycosylases (LTs) play an integral role in the metabolism of the peptidoglycan (PG) sacculus. Their lytic action creates space within the PG sacculus to allow for its expansion as well as for the insertion of various structures such as secretion systems and flagella. In Shewanella sp. (strain MR-4), this protein is Membrane-bound lytic murein transglycosylase F.